A 575-amino-acid polypeptide reads, in one-letter code: Kelch repeat and BTB domain-containing protein 8 (575 aa).

The BTB domain maps to 23–91 (TDIVVEVDHG…AYTSRVILTE (69 aa)). Residues 126–228 (SIGVFIFADH…MEDAFIEKIP (103 aa)) enclose the BACK domain. 5 Kelch repeats span residues 310–364 (DIYI…YCCG), 365–415 (KMYA…EHKE), 417–455 (IYVL…VYKD), 457–506 (IYYI…LFQN), and 516–562 (QVTV…FECA).

The protein belongs to the KBTBD8 family. Component of the BCR(KBTBD8) E3 ubiquitin ligase complex, at least composed of CUL3, KBTBD8 and RBX1.

Its subcellular location is the cytoplasm. It localises to the cytoskeleton. The protein localises to the spindle. It is found in the golgi apparatus. In terms of biological role, substrate-specific adapter of a BCR (BTB-CUL3-RBX1) E3 ubiquitin ligase complex that acts as a regulator of neural crest specification. The BCR(KBTBD8) complex acts by mediating monoubiquitination of NOLC1 and TCOF1: monoubiquitination promotes the formation of a NOLC1-TCOF1 complex that acts as a platform to connect RNA polymerase I with enzymes responsible for ribosomal processing and modification, leading to remodel the translational program of differentiating cells in favor of neural crest specification. The protein is Kelch repeat and BTB domain-containing protein 8 of Rattus norvegicus (Rat).